The chain runs to 447 residues: Tektin-4 (447 aa).

Coiled-coil stretches lie at residues 114–143, 324–348, and 375–423; these read KSELQREIDELSSETDQMMAQKLRLQRALD, KILSEITDQEHQIAALKQAIKDKEA, and FRLM…TNSL.

This sequence belongs to the tektin family. As to quaternary structure, microtubule inner protein component of sperm flagellar doublet microtubules. Ubiquitinated, leading to its degradation. Deubiquitinated by USP16, promoting its stability.

The protein localises to the cytoplasm. It is found in the cytoskeleton. Its subcellular location is the cilium axoneme. The protein resides in the flagellum axoneme. Its function is as follows. Microtubule inner protein (MIP) part of the dynein-decorated doublet microtubules (DMTs) in cilia and flagellar axoneme. Forms filamentous polymers in the walls of ciliary and flagellar microtubules. Contributes to normal sperm motility. This chain is Tektin-4 (Tekt4), found in Rattus norvegicus (Rat).